The primary structure comprises 23 residues: Potassium channel toxin kappa-KTx 1.3 (23 aa).

Cystine bridges form between Cys4/Cys22 and Cys8/Cys18.

It belongs to the short scorpion toxin superfamily. Potassium channel inhibitor kappa-KTx family. Kappa-KTx 1 subfamily. Monomer. Post-translationally, is not amidated. In terms of tissue distribution, expressed by the venom gland.

It is found in the secreted. Functionally, shows very weak blocking activity on voltage-gated potassium channels Kv10.1/KCNH1/EAG1 (6.2% inhibition by 40 uM of the toxin). Has no effect on the other voltage-gated potassium channels tested. This chain is Potassium channel toxin kappa-KTx 1.3, found in Heterometrus spinifer (Asia giant forest scorpion).